Reading from the N-terminus, the 302-residue chain is Protein KTI12 homolog (302 aa).

8–15 (GQPCSGKS) is an ATP binding site. Residues 260–273 (LRRTFVKLMGQSSL) form a calmodulin-binding region.

Belongs to the KTI12 family. As to quaternary structure, interacts with the elongator complex. Binds to calmodulin in a calcium-dependent manner. Expressed in roots, hypocotyls, cotyledons, shoot apices, stems, inflorescence apices, leaves and flowers.

It localises to the cytoplasm. The protein localises to the nucleus. In terms of biological role, elongator complex-associated factor that is not a structural subunit but rather transiently contacts the complex. Regulates both meristem activity and organ growth; acts as a positive regulator of adaxial leaf patterning by modulating both cell division and differentiation. Required for an early step in synthesis of 5-carbamoylmethyl (ncm5) groups present on uridines (ncm5U) at the wobble position in tRNA. This Arabidopsis thaliana (Mouse-ear cress) protein is Protein KTI12 homolog.